The chain runs to 429 residues: 3-phosphoshikimate 1-carboxyvinyltransferase (429 aa).

3-phosphoshikimate-binding residues include Lys-23, Ser-24, and Arg-28. Residue Lys-23 coordinates phosphoenolpyruvate. Positions 97 and 125 each coordinate phosphoenolpyruvate. Residues Ser-170, Ser-171, Gln-172, Ser-198, Asp-314, Asn-338, and Lys-342 each coordinate 3-phosphoshikimate. Phosphoenolpyruvate is bound at residue Gln-172. Asp-314 serves as the catalytic Proton acceptor. Residues Arg-346, Arg-388, and Lys-413 each coordinate phosphoenolpyruvate.

Belongs to the EPSP synthase family. As to quaternary structure, monomer.

It localises to the cytoplasm. The catalysed reaction is 3-phosphoshikimate + phosphoenolpyruvate = 5-O-(1-carboxyvinyl)-3-phosphoshikimate + phosphate. It participates in metabolic intermediate biosynthesis; chorismate biosynthesis; chorismate from D-erythrose 4-phosphate and phosphoenolpyruvate: step 6/7. Its function is as follows. Catalyzes the transfer of the enolpyruvyl moiety of phosphoenolpyruvate (PEP) to the 5-hydroxyl of shikimate-3-phosphate (S3P) to produce enolpyruvyl shikimate-3-phosphate and inorganic phosphate. The polypeptide is 3-phosphoshikimate 1-carboxyvinyltransferase (Pectobacterium atrosepticum (strain SCRI 1043 / ATCC BAA-672) (Erwinia carotovora subsp. atroseptica)).